We begin with the raw amino-acid sequence, 32 residues long: Photosystem II reaction center protein T (32 aa).

The helical transmembrane segment at 3 to 23 (ALVYTFLLIGTLIVIFFAVFF) threads the bilayer.

Belongs to the PsbT family. PSII is composed of 1 copy each of membrane proteins PsbA, PsbB, PsbC, PsbD, PsbE, PsbF, PsbH, PsbI, PsbJ, PsbK, PsbL, PsbM, PsbT, PsbX, PsbY, PsbZ, Psb30/Ycf12, at least 3 peripheral proteins of the oxygen-evolving complex and a large number of cofactors. It forms dimeric complexes.

The protein resides in the plastid. The protein localises to the chloroplast thylakoid membrane. Found at the monomer-monomer interface of the photosystem II (PS II) dimer, plays a role in assembly and dimerization of PSII. PSII is a light-driven water plastoquinone oxidoreductase, using light energy to abstract electrons from H(2)O, generating a proton gradient subsequently used for ATP formation. The chain is Photosystem II reaction center protein T from Phaeodactylum tricornutum (strain CCAP 1055/1).